A 181-amino-acid chain; its full sequence is MQDNRFFILMILLVFSTSLNQGQKLKANDRRSAGLVPYPRIGRNSEISSFSRSERALGLIHQPRIGRSDVSSFDNLNRFHDLSSDADIEFYAMDMDPLLSPDYEDYASKPIALKYADKLQKDNSWLMPDHIHGYKDFHFAQKINDPRLYYSILRDSRNTQGQGGYTPRLGRENERDTANFL.

An N-terminal signal peptide occupies residues 1 to 22 (MQDNRFFILMILLVFSTSLNQG). A propeptide spanning residues 23 to 29 (QKLKAND) is cleaved from the precursor. I41 is modified (isoleucine amide). A propeptide spanning residues 44-54 (NSEISSFSRSE) is cleaved from the precursor. I65 bears the Isoleucine amide mark. Positions 68-181 (SDVSSFDNLN…ENERDTANFL (114 aa)) are excised as a propeptide. The disordered stretch occupies residues 159–181 (TQGQGGYTPRLGRENERDTANFL). The span at 169–181 (LGRENERDTANFL) shows a compositional bias: basic and acidic residues.

A pyrokinin potentially constituted by residues Asn-158 to Gly-170 has so far not been detected and might be completely absent in ants. In terms of tissue distribution, periviscerokinin 1 and 2 are expressed in central brain, antennal lobes and gnathal, thoracic and abominal ganglia. Periviscerokinin 2 is also expressed in the retrocerebral complex (at protein level).

The protein localises to the secreted. Functionally, periviscerokinins mediate visceral muscle contractile activity (myotropic activity). This is CAPA peptides from Camponotus floridanus (Florida carpenter ant).